A 245-amino-acid chain; its full sequence is tRNA (guanine-N(1)-)-methyltransferase (245 aa).

S-adenosyl-L-methionine is bound by residues Gly113 and Ile133–Leu138.

The protein belongs to the RNA methyltransferase TrmD family. In terms of assembly, homodimer.

The protein localises to the cytoplasm. It catalyses the reaction guanosine(37) in tRNA + S-adenosyl-L-methionine = N(1)-methylguanosine(37) in tRNA + S-adenosyl-L-homocysteine + H(+). Its function is as follows. Specifically methylates guanosine-37 in various tRNAs. In Anoxybacillus flavithermus (strain DSM 21510 / WK1), this protein is tRNA (guanine-N(1)-)-methyltransferase.